We begin with the raw amino-acid sequence, 166 residues long: Large ribosomal subunit protein uL10 (166 aa).

Belongs to the universal ribosomal protein uL10 family. As to quaternary structure, part of the ribosomal stalk of the 50S ribosomal subunit. The N-terminus interacts with L11 and the large rRNA to form the base of the stalk. The C-terminus forms an elongated spine to which L12 dimers bind in a sequential fashion forming a multimeric L10(L12)X complex.

Functionally, forms part of the ribosomal stalk, playing a central role in the interaction of the ribosome with GTP-bound translation factors. The polypeptide is Large ribosomal subunit protein uL10 (rplJ) (Streptococcus pyogenes serotype M18 (strain MGAS8232)).